A 109-amino-acid chain; its full sequence is DNA-directed RNA polymerase subunit I (109 aa).

It catalyses the reaction RNA(n) + a ribonucleoside 5'-triphosphate = RNA(n+1) + diphosphate. In terms of biological role, DNA-dependent RNA polymerase catalyzes the transcription of DNA into RNA using the four ribonucleoside triphosphates as substrates. The chain is DNA-directed RNA polymerase subunit I (rpoI) from Methanocaldococcus jannaschii (strain ATCC 43067 / DSM 2661 / JAL-1 / JCM 10045 / NBRC 100440) (Methanococcus jannaschii).